A 300-amino-acid chain; its full sequence is MMTLEPNQEQLKKMKSHPGFIAALDQSGGSTPGALADYGIEPNTYSGDDQMFALVHQMRTRIMTSPGFTGDRILAAILFEDTMNREVDGEPTANYLWQNKQIVPILKVDKGLAQEKDGSQLMKPIPQLDSLLMKAKKKGIFGTKMRSFIKHANPAGIEAIVDQQFELAQQIIAAGLVPIIEPEVDIHCSEKAQAEALLKQAMLKHLNQLPKGQWVMLKLTLPEQDNLYSNCIEHANVLRVVALSGGYSQAEANERLSRNHGVIASFSRALTEGLTAQQTDAEFNTMLDESIEKIYQASIT.

The Proton acceptor role is filled by Glu-181. Lys-218 serves as the catalytic Schiff-base intermediate with dihydroxyacetone-P.

Belongs to the class I fructose-bisphosphate aldolase family.

It catalyses the reaction beta-D-fructose 1,6-bisphosphate = D-glyceraldehyde 3-phosphate + dihydroxyacetone phosphate. Its pathway is carbohydrate degradation; glycolysis; D-glyceraldehyde 3-phosphate and glycerone phosphate from D-glucose: step 4/4. The chain is Fructose-bisphosphate aldolase class 1 (fda) from Synechocystis sp. (strain ATCC 27184 / PCC 6803 / Kazusa).